The following is a 328-amino-acid chain: Adenosine receptor A1 (328 aa).

Topologically, residues 1–10 (MPPSISAFQA) are extracellular. The helical transmembrane segment at 11–33 (AYIGIEVLIALVSVPGNVLVIWA) threads the bilayer. Over 34–46 (VKVNQALRDATFC) the chain is Cytoplasmic. A helical membrane pass occupies residues 47–69 (FIVSLAVADVAVGALVIPLAILI). Topologically, residues 70–80 (NIGPETYFHTC) are extracellular. C80 and C169 are oxidised to a cystine. The helical transmembrane segment at 81–102 (LMVACPVLILTQSSILALLAIA) threads the bilayer. The Cytoplasmic portion of the chain corresponds to 103-123 (VDRYLRVKIPLRYKAVVTPRR). Residues 124 to 146 (AAVAIAGCWILSLVVGLTPMFGW) form a helical membrane-spanning segment. Topologically, residues 147–176 (NNLREVQRAWAANGSVGEPVIKCEFEKVIS) are extracellular. N159 is a glycosylation site (N-linked (GlcNAc...) asparagine). The helical transmembrane segment at 177–201 (MEYMVYFNFFVWVLPPLLLMVLIYL) threads the bilayer. Residues 202–235 (EVFYLIRRQLSKKASASSGDPHKYYGKELKIAKS) are Cytoplasmic-facing. A helical membrane pass occupies residues 236–259 (LALILFLFALSWLPLHILNCVTLF). Residues 260–267 (CPSCQKPS) are Extracellular-facing. The chain crosses the membrane as a helical span at residues 268–292 (ILVYTAIFLTHGNSAMNPIVYAFRI). Over 293 to 328 (HKFRVTFLKIWNDHFRCRPAPAGDGDEDLPEEKPND) the chain is Cytoplasmic. C309 is lipidated: S-palmitoyl cysteine.

This sequence belongs to the G-protein coupled receptor 1 family.

The protein resides in the cell membrane. Its function is as follows. Receptor for adenosine. The activity of this receptor is mediated by G proteins which inhibit adenylyl cyclase. This chain is Adenosine receptor A1 (ADORA1), found in Oryctolagus cuniculus (Rabbit).